Consider the following 539-residue polypeptide: Probable malate:quinone oxidoreductase 3 (539 aa).

The segment at 516 to 539 (LEPPVSPQRPESIRPADSQGVASR) is disordered.

Belongs to the MQO family. The cofactor is FAD.

The catalysed reaction is (S)-malate + a quinone = a quinol + oxaloacetate. It participates in carbohydrate metabolism; tricarboxylic acid cycle; oxaloacetate from (S)-malate (quinone route): step 1/1. This chain is Probable malate:quinone oxidoreductase 3, found in Pseudomonas putida (strain ATCC 47054 / DSM 6125 / CFBP 8728 / NCIMB 11950 / KT2440).